The following is a 171-amino-acid chain: Xanthine-guanine phosphoribosyltransferase (171 aa).

Residues R51–G52 and D106–T114 each bind 5-phospho-alpha-D-ribose 1-diphosphate. D107 lines the Mg(2+) pocket. Guanine is bound by residues D110 and I153. Residues D110 and I153 each contribute to the xanthine site. GMP-binding positions include D110–T114 and W152–I153.

The protein belongs to the purine/pyrimidine phosphoribosyltransferase family. XGPT subfamily. In terms of assembly, homotetramer. Mg(2+) is required as a cofactor.

It is found in the cell inner membrane. It catalyses the reaction GMP + diphosphate = guanine + 5-phospho-alpha-D-ribose 1-diphosphate. The enzyme catalyses XMP + diphosphate = xanthine + 5-phospho-alpha-D-ribose 1-diphosphate. The catalysed reaction is IMP + diphosphate = hypoxanthine + 5-phospho-alpha-D-ribose 1-diphosphate. It participates in purine metabolism; GMP biosynthesis via salvage pathway; GMP from guanine: step 1/1. It functions in the pathway purine metabolism; XMP biosynthesis via salvage pathway; XMP from xanthine: step 1/1. Its function is as follows. Purine salvage pathway enzyme that catalyzes the transfer of the ribosyl-5-phosphate group from 5-phospho-alpha-D-ribose 1-diphosphate (PRPP) to the N9 position of the 6-oxopurines guanine and xanthine to form the corresponding ribonucleotides GMP (guanosine 5'-monophosphate) and XMP (xanthosine 5'-monophosphate), with the release of PPi. To a lesser extent, also acts on hypoxanthine. The protein is Xanthine-guanine phosphoribosyltransferase of Ruegeria pomeroyi (strain ATCC 700808 / DSM 15171 / DSS-3) (Silicibacter pomeroyi).